A 420-amino-acid polypeptide reads, in one-letter code: Serine hydroxymethyltransferase (420 aa).

Residues Leu121 and 125–127 contribute to the (6S)-5,6,7,8-tetrahydrofolate site; that span reads GHL. Lys229 carries the N6-(pyridoxal phosphate)lysine modification.

It belongs to the SHMT family. In terms of assembly, homodimer. It depends on pyridoxal 5'-phosphate as a cofactor.

It is found in the cytoplasm. It catalyses the reaction (6R)-5,10-methylene-5,6,7,8-tetrahydrofolate + glycine + H2O = (6S)-5,6,7,8-tetrahydrofolate + L-serine. It functions in the pathway one-carbon metabolism; tetrahydrofolate interconversion. The protein operates within amino-acid biosynthesis; glycine biosynthesis; glycine from L-serine: step 1/1. Catalyzes the reversible interconversion of serine and glycine with tetrahydrofolate (THF) serving as the one-carbon carrier. This reaction serves as the major source of one-carbon groups required for the biosynthesis of purines, thymidylate, methionine, and other important biomolecules. Also exhibits THF-independent aldolase activity toward beta-hydroxyamino acids, producing glycine and aldehydes, via a retro-aldol mechanism. In Streptomyces coelicolor (strain ATCC BAA-471 / A3(2) / M145), this protein is Serine hydroxymethyltransferase.